A 388-amino-acid chain; its full sequence is Pepsin A-5 (388 aa).

Residues Met1–Cys15 form the signal peptide. A propeptide spans Ile16 to Leu62 (activation peptide). Residues Tyr76–Ala385 form the Peptidase A1 domain. Asp94 is an active-site residue. A disulfide bridge links Cys107 with Cys112. Ser130 bears the Phosphoserine mark. Cys268 and Cys272 are joined by a disulfide. Asp277 is a catalytic residue. An intrachain disulfide couples Cys311 to Cys344.

This sequence belongs to the peptidase A1 family.

Its subcellular location is the secreted. It catalyses the reaction Preferential cleavage: hydrophobic, preferably aromatic, residues in P1 and P1' positions. Cleaves 1-Phe-|-Val-2, 4-Gln-|-His-5, 13-Glu-|-Ala-14, 14-Ala-|-Leu-15, 15-Leu-|-Tyr-16, 16-Tyr-|-Leu-17, 23-Gly-|-Phe-24, 24-Phe-|-Phe-25 and 25-Phe-|-Tyr-26 bonds in the B chain of insulin.. Functionally, shows particularly broad specificity; although bonds involving phenylalanine and leucine are preferred, many others are also cleaved to some extent. This Homo sapiens (Human) protein is Pepsin A-5 (PGA5).